The chain runs to 626 residues: Extracellular metalloproteinase 1 (626 aa).

The N-terminal stretch at 1 to 17 is a signal peptide; that stretch reads MLSSLLAGAGLVALAAS. Positions 18 to 241 are excised as a propeptide; it reads HPTSHGNALT…IHGVVDYSAD (224 aa). Asparagine 315 carries an N-linked (GlcNAc...) asparagine glycan. Histidine 425 provides a ligand contact to Zn(2+). The active site involves glutamate 426. Position 429 (histidine 429) interacts with Zn(2+). The interval 606–626 is disordered; the sequence is GSGARYSSTARTGSTALPSGC. Polar residues predominate over residues 610 to 626; that stretch reads RYSSTARTGSTALPSGC.

This sequence belongs to the peptidase M36 family. Zn(2+) is required as a cofactor.

It localises to the secreted. In terms of biological role, secreted metalloproteinase that allows assimilation of proteinaceous substrates. The polypeptide is Extracellular metalloproteinase 1 (MEP1) (Phaeosphaeria nodorum (strain SN15 / ATCC MYA-4574 / FGSC 10173) (Glume blotch fungus)).